The primary structure comprises 577 residues: F-box/TPR repeat protein pof3 (577 aa).

3 TPR repeats span residues 6-39, 41-74, and 76-108; these read VKAI…EPNP, IDLF…NARN, and RGYL…VHKM. Residues 138-180 form the F-box domain; the sequence is ILPREVLLCILQQLNFKSIVQCMQVCKHWRDCIKKEPSLFCCL.

A part of the E3 ubiquitin ligase Skp1-Cullin-1-F-box (SCF) complex. Interacts with cul1, mcl1 and skp1.

Its subcellular location is the mitochondrion. The protein localises to the nucleus. Functionally, has a role in substrate recognition in the Skp1-Cullin-1/Cdc53-F-box (SCF) ubiquitin ligase complex. Required for the maintenance of telomere length and transcriptional silencing at the telomere. Also required for chromosome segregation. This is F-box/TPR repeat protein pof3 (pof3) from Schizosaccharomyces pombe (strain 972 / ATCC 24843) (Fission yeast).